The sequence spans 146 residues: Protein archease (146 aa).

Ca(2+) is bound by residues aspartate 16, aspartate 145, and isoleucine 146.

Belongs to the archease family.

Its function is as follows. Activates the tRNA-splicing ligase complex by facilitating the enzymatic turnover of catalytic subunit RtcB. Acts by promoting the guanylylation of RtcB, a key intermediate step in tRNA ligation. Can also alter the NTP specificity of RtcB such that ATP, dGTP or ITP is used efficiently. This Methanosarcina acetivorans (strain ATCC 35395 / DSM 2834 / JCM 12185 / C2A) protein is Protein archease.